Reading from the N-terminus, the 182-residue chain is PTS system glucitol/sorbitol-specific EIIC component (182 aa).

The PTS EIIC type-5 domain maps to 1 to 182; the sequence is MDAIVYFAKG…IELSNQLKAN (182 aa). Transmembrane regions (helical) follow at residues 28–48, 63–83, and 139–159; these read GIIPKVLLLLVFMNSIIAFIG, VILAYGVLPFLSAFMLGNPMA, and TALGLRYLLVGLVMNFFAGWV.

Its subcellular location is the cell membrane. Its function is as follows. The phosphoenolpyruvate-dependent sugar phosphotransferase system (PTS), a major carbohydrate active transport system, catalyzes the phosphorylation of incoming sugar substrates concomitant with their translocation across the cell membrane. The enzyme II complex composed of SrlA, SrlB and SrlE is involved in glucitol/sorbitol transport. The sequence is that of PTS system glucitol/sorbitol-specific EIIC component (srlA) from Clostridium beijerinckii (strain ATCC 51743 / NCIMB 8052) (Clostridium acetobutylicum).